Here is a 132-residue protein sequence, read N- to C-terminus: T-cell receptor alpha chain V region CTL-F3 (132 aa).

Residues 1–22 form the signal peptide; that stretch reads MNMRPDTCSVLVLLLMLRRNNG. A v segment region spans residues 23–114; the sequence is DSVTQTEGLV…DSALYYCALS (92 aa). An N-linked (GlcNAc...) asparagine glycan is attached at Asn-43. A disulfide bond links Cys-44 and Cys-111. The j segment stretch occupies residues 115-132; sequence NAGAKLTFGGGTRLTVRP.

The sequence is that of T-cell receptor alpha chain V region CTL-F3 from Mus musculus (Mouse).